A 432-amino-acid polypeptide reads, in one-letter code: Glutamyl-tRNA reductase (432 aa).

Substrate-binding positions include 49 to 52 (TCNR), Ser-109, 114 to 116 (EGQ), and Gln-120. Residue Cys-50 is the Nucleophile of the active site. Residue 198 to 203 (GAGRMS) coordinates NADP(+).

Belongs to the glutamyl-tRNA reductase family. Homodimer.

It carries out the reaction (S)-4-amino-5-oxopentanoate + tRNA(Glu) + NADP(+) = L-glutamyl-tRNA(Glu) + NADPH + H(+). The protein operates within porphyrin-containing compound metabolism; protoporphyrin-IX biosynthesis; 5-aminolevulinate from L-glutamyl-tRNA(Glu): step 1/2. It participates in porphyrin-containing compound metabolism; chlorophyll biosynthesis. In terms of biological role, catalyzes the NADPH-dependent reduction of glutamyl-tRNA(Glu) to glutamate 1-semialdehyde (GSA). The chain is Glutamyl-tRNA reductase from Synechococcus sp. (strain CC9902).